Here is a 309-residue protein sequence, read N- to C-terminus: tRNA-cytidine(32) 2-sulfurtransferase (309 aa).

Residues 47–52 carry the PP-loop motif motif; it reads SGGKDS. 3 residues coordinate [4Fe-4S] cluster: Cys-122, Cys-125, and Cys-213.

The protein belongs to the TtcA family. In terms of assembly, homodimer. Requires Mg(2+) as cofactor. It depends on [4Fe-4S] cluster as a cofactor.

Its subcellular location is the cytoplasm. The enzyme catalyses cytidine(32) in tRNA + S-sulfanyl-L-cysteinyl-[cysteine desulfurase] + AH2 + ATP = 2-thiocytidine(32) in tRNA + L-cysteinyl-[cysteine desulfurase] + A + AMP + diphosphate + H(+). It functions in the pathway tRNA modification. Catalyzes the ATP-dependent 2-thiolation of cytidine in position 32 of tRNA, to form 2-thiocytidine (s(2)C32). The sulfur atoms are provided by the cysteine/cysteine desulfurase (IscS) system. The sequence is that of tRNA-cytidine(32) 2-sulfurtransferase from Erwinia tasmaniensis (strain DSM 17950 / CFBP 7177 / CIP 109463 / NCPPB 4357 / Et1/99).